We begin with the raw amino-acid sequence, 833 residues long: RNA-binding protein 5-A (833 aa).

The disordered stretch occupies residues 1-87 (MGSDKRVSRS…GYHSDGDYMD (87 aa)). Residues 102–182 (KTIMLRGLPI…KTIAMHYSNP (81 aa)) form the RRM 1 domain. A RanBP2-type zinc finger spans residues 185–214 (KFEDWLCNKCGLYNFRRRLKCFRCGAAKAE). One can recognise an RRM 2 domain in the interval 241–325 (SAIILRNIGP…KTIGVDFAKS (85 aa)). Residues 396–428 (TGAAEQGTAPQAESSSPVPATTSAVVCQSPQMY) show a composition bias toward polar residues. 2 disordered regions span residues 396-458 (TGAA…EEAA) and 523-559 (AADGAGQSGTQPNGANPGTSKEGKEKKEKPKSKTAQQ). Positions 429–458 (QQPGSPTQSSTSTVAASATPASGTSAEEAA) are enriched in low complexity. Residues 667–692 (LACLLCRRQFPNKDALTRHQQLSDLH) form a C2H2-type zinc finger. Residues 761 to 807 (NSNIGNKMLQAMGWKEGSGLGRKSQGITAPIQAQVRMRGAGLGAKGS) form the G-patch domain.

It belongs to the RBM5/RBM10 family. In terms of assembly, component of the spliceosome A complex (also known as the prespliceosome). Appears to dissociate from the spliceosome upon formation of the spliceosome B complex (also known as the precatalytic spliceosome), in which the heterotrimeric U4/U6.U5 snRNPs are bound.

The protein resides in the nucleus. Its function is as follows. Component of the spliceosome A complex. Regulates alternative splicing of a number of mRNAs. May modulate splice site pairing after recruitment of the U1 and U2 snRNPs to the 5' and 3' splice sites of the intron. In Xenopus laevis (African clawed frog), this protein is RNA-binding protein 5-A (rbm5-a).